Here is a 434-residue protein sequence, read N- to C-terminus: Adenylosuccinate synthetase (434 aa).

GTP is bound by residues 22–28 (GDEGKGK) and 50–52 (GHT). The active-site Proton acceptor is D23. Positions 23 and 50 each coordinate Mg(2+). Residues 23–26 (DEGK), 48–51 (NAGH), T139, R153, Q234, T249, and R313 each bind IMP. The active-site Proton donor is the H51. 309–315 (ATTGRKR) is a substrate binding site. Residues R315, 341–343 (KLD), and 423–425 (SVG) each bind GTP.

The protein belongs to the adenylosuccinate synthetase family. As to quaternary structure, homodimer. The cofactor is Mg(2+).

The protein resides in the cytoplasm. The catalysed reaction is IMP + L-aspartate + GTP = N(6)-(1,2-dicarboxyethyl)-AMP + GDP + phosphate + 2 H(+). It functions in the pathway purine metabolism; AMP biosynthesis via de novo pathway; AMP from IMP: step 1/2. Plays an important role in the de novo pathway of purine nucleotide biosynthesis. Catalyzes the first committed step in the biosynthesis of AMP from IMP. The polypeptide is Adenylosuccinate synthetase (Chlorobium phaeovibrioides (strain DSM 265 / 1930) (Prosthecochloris vibrioformis (strain DSM 265))).